The following is a 360-amino-acid chain: Protein Wnt-5b (360 aa).

The first 16 residues, 1 to 16 (MTPILRLLLLSSLLSC), serve as a signal peptide directing secretion. A disulfide bridge connects residues cysteine 84 and cysteine 95. Residues asparagine 94 and asparagine 100 are each glycosylated (N-linked (GlcNAc...) asparagine). Disulfide bonds link cysteine 134–cysteine 142, cysteine 144–cysteine 162, cysteine 218–cysteine 232, cysteine 220–cysteine 227, cysteine 289–cysteine 320, cysteine 305–cysteine 315, cysteine 319–cysteine 359, cysteine 335–cysteine 350, cysteine 337–cysteine 347, and cysteine 342–cysteine 343. Residue serine 224 is the site of O-palmitoleoyl serine; by PORCN attachment. N-linked (GlcNAc...) asparagine glycans are attached at residues asparagine 292 and asparagine 306.

Belongs to the Wnt family. Post-translationally, palmitoleoylation is required for efficient binding to frizzled receptors. Depalmitoleoylation leads to Wnt signaling pathway inhibition.

It localises to the secreted. The protein resides in the extracellular space. It is found in the extracellular matrix. Functionally, ligand for members of the frizzled family of seven transmembrane receptors. Probable developmental protein. May be a signaling molecule which affects the development of discrete regions of tissues. Is likely to signal over only few cell diameters. This Xenopus laevis (African clawed frog) protein is Protein Wnt-5b (wnt5b).